The primary structure comprises 152 residues: Small ribosomal subunit protein uS13z/uS13y/uS13x (152 aa).

Ser2 bears the N-acetylserine mark.

Belongs to the universal ribosomal protein uS13 family.

Its subcellular location is the cytoplasm. In terms of biological role, located at the top of the head of the 40S subunit, it contacts several helices of the 18S rRNA. The chain is Small ribosomal subunit protein uS13z/uS13y/uS13x (RPS18A) from Arabidopsis thaliana (Mouse-ear cress).